A 56-amino-acid polypeptide reads, in one-letter code: MFGWAVTFLIIALIAALFGFTGLAGVATHIAWILFVVGLILFVVFLLLGRRGRPPL.

2 helical membrane passes run 1–21 (MFGW…FGFT) and 29–49 (HIAW…LLLG).

Belongs to the UPF0391 family.

It localises to the cell membrane. This chain is UPF0391 membrane protein Noc_0482, found in Nitrosococcus oceani (strain ATCC 19707 / BCRC 17464 / JCM 30415 / NCIMB 11848 / C-107).